The following is a 208-amino-acid chain: Molybdenum cofactor guanylyltransferase (208 aa).

GTP is bound by residues 10 to 12, K23, D69, and D103; that span reads LAG. A Mg(2+)-binding site is contributed by D103.

Belongs to the MobA family. As to quaternary structure, monomer. The cofactor is Mg(2+).

The protein resides in the cytoplasm. The enzyme catalyses Mo-molybdopterin + GTP + H(+) = Mo-molybdopterin guanine dinucleotide + diphosphate. Its function is as follows. Transfers a GMP moiety from GTP to Mo-molybdopterin (Mo-MPT) cofactor (Moco or molybdenum cofactor) to form Mo-molybdopterin guanine dinucleotide (Mo-MGD) cofactor. The chain is Molybdenum cofactor guanylyltransferase from Mesorhizobium japonicum (strain LMG 29417 / CECT 9101 / MAFF 303099) (Mesorhizobium loti (strain MAFF 303099)).